Consider the following 80-residue polypeptide: EMBRYO SURROUNDING FACTOR 1-like protein 1 (80 aa).

Residues M1–C22 form the signal peptide. 4 disulfide bridges follow: C38-C52, C43-C78, C50-C74, and C53-C64.

The protein belongs to the MEG family. In terms of tissue distribution, expressed in leaves.

The chain is EMBRYO SURROUNDING FACTOR 1-like protein 1 (ESFL1) from Arabidopsis thaliana (Mouse-ear cress).